Consider the following 243-residue polypeptide: Ubiquinone/menaquinone biosynthesis C-methyltransferase UbiE (243 aa).

Residues Thr-69, Asp-90, and 116–117 (DA) each bind S-adenosyl-L-methionine.

Belongs to the class I-like SAM-binding methyltransferase superfamily. MenG/UbiE family.

It catalyses the reaction a 2-demethylmenaquinol + S-adenosyl-L-methionine = a menaquinol + S-adenosyl-L-homocysteine + H(+). The enzyme catalyses a 2-methoxy-6-(all-trans-polyprenyl)benzene-1,4-diol + S-adenosyl-L-methionine = a 5-methoxy-2-methyl-3-(all-trans-polyprenyl)benzene-1,4-diol + S-adenosyl-L-homocysteine + H(+). It participates in quinol/quinone metabolism; menaquinone biosynthesis; menaquinol from 1,4-dihydroxy-2-naphthoate: step 2/2. The protein operates within cofactor biosynthesis; ubiquinone biosynthesis. Its function is as follows. Methyltransferase required for the conversion of demethylmenaquinol (DMKH2) to menaquinol (MKH2) and the conversion of 2-polyprenyl-6-methoxy-1,4-benzoquinol (DDMQH2) to 2-polyprenyl-3-methyl-6-methoxy-1,4-benzoquinol (DMQH2). The polypeptide is Ubiquinone/menaquinone biosynthesis C-methyltransferase UbiE (Burkholderia cenocepacia (strain HI2424)).